The primary structure comprises 372 residues: tRNA-specific 2-thiouridylase MnmA (372 aa).

ATP is bound by residues 16–23 (GMSGGVDS) and Met42. The interval 102-104 (NPD) is interaction with target base in tRNA. The active-site Nucleophile is Cys107. A disulfide bridge links Cys107 with Cys205. ATP is bound at residue Gly132. The tract at residues 155–157 (KDQ) is interaction with tRNA. The active-site Cysteine persulfide intermediate is the Cys205. The tract at residues 317–318 (RY) is interaction with tRNA.

It belongs to the MnmA/TRMU family.

The protein localises to the cytoplasm. It catalyses the reaction S-sulfanyl-L-cysteinyl-[protein] + uridine(34) in tRNA + AH2 + ATP = 2-thiouridine(34) in tRNA + L-cysteinyl-[protein] + A + AMP + diphosphate + H(+). Functionally, catalyzes the 2-thiolation of uridine at the wobble position (U34) of tRNA, leading to the formation of s(2)U34. The sequence is that of tRNA-specific 2-thiouridylase MnmA from Shewanella denitrificans (strain OS217 / ATCC BAA-1090 / DSM 15013).